Here is a 100-residue protein sequence, read N- to C-terminus: Putative septation protein SpoVG (100 aa).

This sequence belongs to the SpoVG family.

Functionally, could be involved in septation. In Staphylococcus haemolyticus (strain JCSC1435), this protein is Putative septation protein SpoVG.